A 161-amino-acid chain; its full sequence is Large ribosomal subunit protein bL9 (161 aa).

This sequence belongs to the bacterial ribosomal protein bL9 family.

Binds to the 23S rRNA. This chain is Large ribosomal subunit protein bL9, found in Blochmanniella floridana.